Here is a 525-residue protein sequence, read N- to C-terminus: BTB/POZ domain-containing protein At1g50280 (525 aa).

In terms of domain architecture, BTB spans 5 to 79; that stretch reads NDLKINLNGQ…CYHNGEILID (75 aa). The region spanning 200–466 is the NPH3 domain; that stretch reads EWWFEDMTNL…IEALKSRCGN (267 aa).

Belongs to the NPH3 family.

The protein operates within protein modification; protein ubiquitination. In terms of biological role, may act as a substrate-specific adapter of an E3 ubiquitin-protein ligase complex (CUL3-RBX1-BTB) which mediates the ubiquitination and subsequent proteasomal degradation of target proteins. This Arabidopsis thaliana (Mouse-ear cress) protein is BTB/POZ domain-containing protein At1g50280.